Reading from the N-terminus, the 1943-residue chain is Cadherin-86C (1943 aa).

The interval 1–102 (MASTSSSQPE…QNQQMQHHWP (102 aa)) is disordered. Residues 1-934 (MASTSSSQPE…TDTQYKAENK (934 aa)) are Extracellular-facing. Asn-12 carries N-linked (GlcNAc...) asparagine glycosylation. Over residues 50–89 (PHHHHHHHHQHHHHHRLKQHHRHHHHHHRLQHHHHHHQQQ) the composition is skewed to basic residues. Residues 90-100 (HNHQNQQMQHH) show a composition bias toward low complexity. Cadherin domains are found at residues 238–366 (CSIT…PPVF), 367–483 (TSAP…PPYF), 484–600 (ENDH…APVF), 601–708 (EQPA…TPIF), and 709–832 (DKDL…SVKF). Asn-244, Asn-419, Asn-531, Asn-579, Asn-585, Asn-612, and Asn-645 each carry an N-linked (GlcNAc...) asparagine glycan. A glycan (N-linked (GlcNAc...) asparagine) is linked at Asn-912. Residues 935–955 (VLFWLLILLATLVALTILILL) traverse the membrane as a helical segment. Residues 956-1943 (LCCICSWCPL…NSGGESPQYS (988 aa)) lie on the Cytoplasmic side of the membrane. Disordered regions lie at residues 1038–1058 (DVGR…SAEE), 1390–1442 (KPSR…RKRI), 1458–1516 (EEEE…SHNR), 1546–1695 (YKHS…ERNV), and 1707–1895 (KSSV…DDHD). Over residues 1047–1058 (EGDRRHIQSAEE) the composition is skewed to basic and acidic residues. The segment covering 1426–1442 (IKRRRTKKRPRQPRKRI) has biased composition (basic residues). Basic and acidic residues-rich tracts occupy residues 1486 to 1497 (QLSDESRKDQSR) and 1507 to 1516 (HRSESDSHNR). Over residues 1552 to 1568 (DFDEDDTEYSIDSDGDE) the composition is skewed to acidic residues. The segment covering 1580–1602 (QENERYRRQERTYAEPENPVDRK) has biased composition (basic and acidic residues). Polar residues predominate over residues 1633-1667 (KQTSSEPPHNRVSISKYESTVTENGRKLMSTSTEI). Residues 1709–1724 (SVSGRTSTESSKSQPS) show a composition bias toward low complexity. Basic and acidic residues-rich tracts occupy residues 1754–1764 (TGGRYKPEPAP), 1774–1793 (LLKE…ETDT), 1800–1810 (HSEHRFERENA), and 1837–1863 (KESK…ENEV). The segment covering 1879–1889 (HPTQKQLNAST) has biased composition (polar residues).

In terms of tissue distribution, as cell intercalation proceeds, a row of stigmatophore cells surrounding the spiracular chamber show expression of Cad86C. Expression is regulated by the Abd-B cascade, requiring sal. Expressed in a broad region of the morphogenetic furrow and in clusters of cells posterior to the morphogenetic furrow. Weakly expressed in the epithelium of wing imaginal disks. In eye imaginal disk cells within the morphogenetic furrow, expression is localized to the apical region.

The protein resides in the cell membrane. Its function is as follows. Cadherins are calcium-dependent cell adhesion proteins. They preferentially interact with themselves in a homophilic manner in connecting cells. In Drosophila melanogaster (Fruit fly), this protein is Cadherin-86C (Cad86C).